The chain runs to 595 residues: Methionine--tRNA ligase (595 aa).

Positions 11–21 match the 'HIGH' region motif; the sequence is PYANGPRHIGH. Zn(2+) contacts are provided by Cys143, Cys146, Cys156, and Cys159. The short motif at 350–354 is the 'KMSKS' region element; that stretch reads KFSSS. Ser353 is a binding site for ATP.

The protein belongs to the class-I aminoacyl-tRNA synthetase family. MetG type 1 subfamily. Monomer. Requires Zn(2+) as cofactor.

The protein localises to the cytoplasm. The enzyme catalyses tRNA(Met) + L-methionine + ATP = L-methionyl-tRNA(Met) + AMP + diphosphate. Is required not only for elongation of protein synthesis but also for the initiation of all mRNA translation through initiator tRNA(fMet) aminoacylation. In Nocardioides sp. (strain ATCC BAA-499 / JS614), this protein is Methionine--tRNA ligase.